The chain runs to 240 residues: Ribosome maturation protein SDO1 homolog (240 aa).

Belongs to the SDO1/SBDS family.

The chain is Ribosome maturation protein SDO1 homolog from Methanocaldococcus jannaschii (strain ATCC 43067 / DSM 2661 / JAL-1 / JCM 10045 / NBRC 100440) (Methanococcus jannaschii).